We begin with the raw amino-acid sequence, 56 residues long: Large ribosomal subunit protein bL33 (56 aa).

The protein belongs to the bacterial ribosomal protein bL33 family.

The polypeptide is Large ribosomal subunit protein bL33 (Tropheryma whipplei (strain TW08/27) (Whipple's bacillus)).